A 155-amino-acid polypeptide reads, in one-letter code: Protein-export protein SecB (155 aa).

The protein belongs to the SecB family. As to quaternary structure, homotetramer, a dimer of dimers. One homotetramer interacts with 1 SecA dimer.

It is found in the cytoplasm. Functionally, one of the proteins required for the normal export of preproteins out of the cell cytoplasm. It is a molecular chaperone that binds to a subset of precursor proteins, maintaining them in a translocation-competent state. It also specifically binds to its receptor SecA. The protein is Protein-export protein SecB of Vibrio vulnificus (strain CMCP6).